Consider the following 73-residue polypeptide: MQKLIILLLVAAVLMSAQAVLQEKRPKEKIKFLSKRKTDAEKQQKRLCPDYTEPCSHAHECCSWNCYNGHCTG.

The signal sequence occupies residues Met-1–Ala-19. Positions Val-20–Gln-44 are excised as a propeptide. 3 disulfides stabilise this stretch: Cys-48-Cys-62, Cys-55-Cys-66, and Cys-61-Cys-71. At Pro-49 the chain carries 4-hydroxyproline. Glu-53 is subject to 4-carboxyglutamate; partial. 4-hydroxyproline is present on Pro-54. The residue at position 60 (Glu-60) is a 4-carboxyglutamate. Residue Trp-64 is modified to 6'-bromotryptophan.

It belongs to the conotoxin O2 superfamily. Expressed by the venom duct.

The protein localises to the secreted. This Conus textile (Cloth-of-gold cone) protein is Conotoxin Gla(3)-TxVI.